Consider the following 104-residue polypeptide: Pterin-4-alpha-carbinolamine dehydratase (104 aa).

At Ala2 the chain carries N-acetylalanine. Substrate contacts are provided by residues 61 to 63 and 78 to 81; these read DHH and STHE.

The protein belongs to the pterin-4-alpha-carbinolamine dehydratase family. As to quaternary structure, homotetramer and homodimer. Heterotetramer with HNF1A; formed by a dimer of dimers. Interacts with HNF1B (via HNF-p1 domain); the interaction increases HNF1B transactivation activity.

The protein localises to the cytoplasm. The protein resides in the nucleus. It carries out the reaction (4aS,6R)-4a-hydroxy-L-erythro-5,6,7,8-tetrahydrobiopterin = (6R)-L-erythro-6,7-dihydrobiopterin + H2O. Involved in tetrahydrobiopterin biosynthesis. Seems to both prevent the formation of 7-pterins and accelerate the formation of quinonoid-BH2. Coactivator for HNF1A-dependent transcription. Regulates the dimerization of homeodomain protein HNF1A and enhances its transcriptional activity. Also acts as a coactivator for HNF1B-dependent transcription. In Bos taurus (Bovine), this protein is Pterin-4-alpha-carbinolamine dehydratase (PCBD1).